Consider the following 315-residue polypeptide: Protein sprouty homolog 2 (315 aa).

Residues 1 to 15 (MEARAQSGNGSQPLL) are compositionally biased toward polar residues. 2 disordered regions span residues 1-39 (MEAR…QQVH) and 51-140 (NTNE…GSSF). Over residues 20–32 (DGGRQRGEPDPRD) the composition is skewed to basic and acidic residues. Positions 108–140 (SRSISTVSSGSRSSTRTSTSSSSSEQRLLGSSF) are enriched in low complexity. Residues 118 to 315 (SRSSTRTSTS…VPPRNFEKPT (198 aa)) are required for interaction with CAV1. Residues 177–291 (RCEDCGKCKC…CYDRVNRPGC (115 aa)) enclose the SPR domain. The required for interaction with TESK1 stretch occupies residues 178-315 (CEDCGKCKCK…VPPRNFEKPT (138 aa)).

Belongs to the sprouty family. In terms of assembly, forms heterodimers with SPRY1. Forms a tripartite complex containing GAB1, METTL13 and SPRY2. Within the complex interacts with METTL13. Interacts with RAF1. Interacts (via C-terminus) with TESK1 (via C-terminus); the interaction disrupts SPRY2 interaction with GRB2, potentially via disruption of SPRY2 serine dephosphorylation. Interacts with PPP2R1A/PP2A-A and PPP2CA/PP2A-C; the interaction with PPP2CA/PP2A-C is inhibited by interaction with TESK1, possibly by vesicular sequestration of SPRY2. Inhibition of the interaction with the serine/threonine-protein phosphatase 2A (PP2A) holoenzyme results in loss of PP2A-mediated dephosphorylation, resulting in the loss of SPRY2 interaction with GRB2. Interacts with GRB2. Interacts with CBL/C-CBL; the interaction inhibits CBL-mediated ubiquitination of EGFR. Interacts (via C-terminus) with CAV1 (via C-terminus). In terms of processing, cleaved at Pro-144 by the prolyl endopeptidase FAP (seprase) activity (in vitro).

Its subcellular location is the cytoplasm. It localises to the cytoskeleton. It is found in the cell projection. The protein localises to the ruffle membrane. Its function is as follows. Antagonist of fibroblast growth factor (FGF) pathways via inhibition of FGF-mediated phosphorylation of ERK1/2. Thereby acts as an antagonist of FGF-induced retinal lens fiber differentiation, may inhibit limb bud outgrowth and may negatively modulate respiratory organogenesis. Inhibits TGFB-induced epithelial-to-mesenchymal transition in retinal lens epithelial cells. Inhibits CBL/C-CBL-mediated EGFR ubiquitination. The polypeptide is Protein sprouty homolog 2 (SPRY2) (Macaca fascicularis (Crab-eating macaque)).